The sequence spans 159 residues: MSDVENQPFFNIQRIYLKDLSLEQPNSPAIFLEQEMPAVEVEVDVKAERLAENVYEIVVAGTVTAKVREKVAFLVEAKQAGIFDIRNIPAEQIDPLCGIACPTILFPYLRSNIADSITRAGFPPIHLAEINFQALYEQRLAEISQQQQQGGAPNGTTLN.

The protein belongs to the SecB family. In terms of assembly, homotetramer, a dimer of dimers. One homotetramer interacts with 1 SecA dimer.

The protein resides in the cytoplasm. Its function is as follows. One of the proteins required for the normal export of preproteins out of the cell cytoplasm. It is a molecular chaperone that binds to a subset of precursor proteins, maintaining them in a translocation-competent state. It also specifically binds to its receptor SecA. The polypeptide is Protein-export protein SecB (Burkholderia mallei (strain NCTC 10229)).